The primary structure comprises 302 residues: Sulfate adenylyltransferase subunit 2 (302 aa).

The protein belongs to the PAPS reductase family. CysD subfamily. In terms of assembly, heterodimer composed of CysD, the smaller subunit, and CysN.

It carries out the reaction sulfate + ATP + H(+) = adenosine 5'-phosphosulfate + diphosphate. It functions in the pathway sulfur metabolism; hydrogen sulfide biosynthesis; sulfite from sulfate: step 1/3. Functionally, with CysN forms the ATP sulfurylase (ATPS) that catalyzes the adenylation of sulfate producing adenosine 5'-phosphosulfate (APS) and diphosphate, the first enzymatic step in sulfur assimilation pathway. APS synthesis involves the formation of a high-energy phosphoric-sulfuric acid anhydride bond driven by GTP hydrolysis by CysN coupled to ATP hydrolysis by CysD. The sequence is that of Sulfate adenylyltransferase subunit 2 from Escherichia coli O7:K1 (strain IAI39 / ExPEC).